A 313-amino-acid polypeptide reads, in one-letter code: Biotin synthase (313 aa).

A Radical SAM core domain is found at 37 to 263 (YYGKKVKLNM…INPTKEIRIA (227 aa)). [4Fe-4S] cluster-binding residues include cysteine 55, cysteine 59, and cysteine 62. [2Fe-2S] cluster is bound by residues cysteine 98, cysteine 131, cysteine 191, and arginine 261.

The protein belongs to the radical SAM superfamily. Biotin synthase family. In terms of assembly, homodimer. [4Fe-4S] cluster is required as a cofactor. Requires [2Fe-2S] cluster as cofactor.

It catalyses the reaction (4R,5S)-dethiobiotin + (sulfur carrier)-SH + 2 reduced [2Fe-2S]-[ferredoxin] + 2 S-adenosyl-L-methionine = (sulfur carrier)-H + biotin + 2 5'-deoxyadenosine + 2 L-methionine + 2 oxidized [2Fe-2S]-[ferredoxin]. It functions in the pathway cofactor biosynthesis; biotin biosynthesis; biotin from 7,8-diaminononanoate: step 2/2. Functionally, catalyzes the conversion of dethiobiotin (DTB) to biotin by the insertion of a sulfur atom into dethiobiotin via a radical-based mechanism. The sequence is that of Biotin synthase from Staphylococcus epidermidis (strain ATCC 12228 / FDA PCI 1200).